Consider the following 347-residue polypeptide: D-alanine--D-alanine ligase (347 aa).

Positions 138-339 (KILCSHAGIP…YSQVIETILA (202 aa)) constitute an ATP-grasp domain. 171 to 226 (SDRFTFPLFVKPVDAGSSFGCTFVDFFEQLPVAIEHALQHGKSAIVEPALDAPEVF) provides a ligand contact to ATP. Asp-296, Glu-308, and Asn-310 together coordinate Mg(2+).

The protein belongs to the D-alanine--D-alanine ligase family. Mg(2+) is required as a cofactor. Mn(2+) serves as cofactor.

It localises to the cytoplasm. It catalyses the reaction 2 D-alanine + ATP = D-alanyl-D-alanine + ADP + phosphate + H(+). The protein operates within cell wall biogenesis; peptidoglycan biosynthesis. Its function is as follows. Cell wall formation. This Tropheryma whipplei (strain TW08/27) (Whipple's bacillus) protein is D-alanine--D-alanine ligase.